The following is a 147-amino-acid chain: Protein SprT-like (147 aa).

The 134-residue stretch at 9 to 142 (AKVKEISLTY…CGKCRGKLIL (134 aa)) folds into the SprT-like domain. Zn(2+) is bound at residue His-65. Glu-66 is an active-site residue. His-69 contacts Zn(2+).

The protein belongs to the SprT family. Zn(2+) is required as a cofactor.

Its subcellular location is the cytoplasm. The chain is Protein SprT-like (yciD) from Lactococcus lactis subsp. lactis (strain IL1403) (Streptococcus lactis).